Reading from the N-terminus, the 339-residue chain is Dipeptide transport system permease protein DppB (339 aa).

Residues 1–9 (MLQFILRRL) are Periplasmic-facing. Residues 10–30 (GLVIPTFIGITLLTFAFVHMI) form a helical membrane-spanning segment. The Cytoplasmic segment spans residues 31–102 (PGDPVMIMAG…VPRFQATLEL (72 aa)). The region spanning 96 to 328 (FQATLELGVC…LVNLLVDLLY (233 aa)) is the ABC transmembrane type-1 domain. The helical transmembrane segment at 103–123 (GVCAMIFATAVGIPVGVLAAV) threads the bilayer. Over 124 to 135 (KRGSIFDHTAVG) the chain is Periplasmic. The helical transmembrane segment at 136-156 (LALTGYSMPIFWWGMMLIMLV) threads the bilayer. Residues 157-171 (SVHWNLTPVSGRVSD) are Cytoplasmic-facing. A helical transmembrane segment spans residues 172 to 192 (MVFLDDSNPLTGFMLIDTAIW). Residues 193–200 (GEDGNFID) are Periplasmic-facing. A helical membrane pass occupies residues 201–221 (AVAHMILPAIVLGTIPLAVIV). The Cytoplasmic segment spans residues 222 to 259 (RMTRSSMLEVLGEDYIRTARAKGLTRMRVIIVHALRNA). The helical transmembrane segment at 260–280 (MLPVVTVIGLQVGTLLAGAIL) threads the bilayer. The Periplasmic portion of the chain corresponds to 281-309 (TETIFSWPGLGRWLIDALQRRDYPVVQGG). The helical transmembrane segment at 310 to 330 (VLLVATMIILVNLLVDLLYGV) threads the bilayer. At 331–339 (VNPRIRHKK) the chain is on the cytoplasmic side.

This sequence belongs to the binding-protein-dependent transport system permease family. OppBC subfamily. The complex is composed of two ATP-binding proteins (DppD and DppF), two transmembrane proteins (DppB and DppC) and a solute-binding protein (DppA).

It localises to the cell inner membrane. Part of the ABC transporter DppABCDF involved in dipeptide transport. Responsible for the translocation of the substrate across the membrane. This Escherichia coli O157:H7 protein is Dipeptide transport system permease protein DppB (dppB).